A 356-amino-acid chain; its full sequence is Phosphate acyltransferase (356 aa).

It belongs to the PlsX family. As to quaternary structure, homodimer. Probably interacts with PlsY.

It is found in the cytoplasm. It catalyses the reaction a fatty acyl-[ACP] + phosphate = an acyl phosphate + holo-[ACP]. Its pathway is lipid metabolism; phospholipid metabolism. Functionally, catalyzes the reversible formation of acyl-phosphate (acyl-PO(4)) from acyl-[acyl-carrier-protein] (acyl-ACP). This enzyme utilizes acyl-ACP as fatty acyl donor, but not acyl-CoA. In Escherichia coli (strain 55989 / EAEC), this protein is Phosphate acyltransferase.